The sequence spans 442 residues: Histidine--tRNA ligase (442 aa).

Belongs to the class-II aminoacyl-tRNA synthetase family. Homodimer.

The protein resides in the cytoplasm. It carries out the reaction tRNA(His) + L-histidine + ATP = L-histidyl-tRNA(His) + AMP + diphosphate + H(+). This Rhodopirellula baltica (strain DSM 10527 / NCIMB 13988 / SH1) protein is Histidine--tRNA ligase.